The sequence spans 360 residues: Mitogen-activated protein kinase 14 (360 aa).

S2 carries the post-translational modification N-acetylserine. S2 is modified (phosphoserine). A Phosphothreonine modification is found at T16. The region spanning Y24–F308 is the Protein kinase domain. Residues V30–V38 and K53 contribute to the ATP site. K53 bears the N6-acetyllysine mark. D150 serves as the catalytic Proton acceptor. K152 carries the post-translational modification N6-acetyllysine. T180 bears the Phosphothreonine; by MAP2K3, MAP2K4, MAP2K6 and autocatalysis mark. Positions T180 to Y182 match the TXY motif. Y182 is modified (phosphotyrosine; by MAP2K3, MAP2K4, MAP2K6 and autocatalysis). T263 carries the phosphothreonine modification. Position 323 is a phosphotyrosine; by ZAP70 (Y323).

The protein belongs to the protein kinase superfamily. CMGC Ser/Thr protein kinase family. MAP kinase subfamily. As to quaternary structure, component of a signaling complex containing at least AKAP13, PKN1, MAPK14, ZAK and MAP2K3. Within this complex, AKAP13 interacts directly with PKN1, which in turn recruits MAPK14, MAP2K3 and ZAK. Binds to a kinase interaction motif within the protein tyrosine phosphatase, PTPRR. This interaction retains MAPK14 in the cytoplasm and prevents nuclear accumulation. Interacts with SPAG9 and GADD45A. Interacts with CDC25B, CDC25C, DUSP1, DUSP10, DUSP16, NP60, SUPT20H and TAB1. Interacts with casein kinase II subunits CSNK2A1 and CSNK2B. Interacts with PPM1D. Interacts with CDK5RAP3; recruits PPM1D to MAPK14 and may regulate its dephosphorylation. Interacts with DUSP2; this interaction does not lead to catalytic activation of DUSP2 and dephosphrylation of MAPK14. Mg(2+) serves as cofactor. Post-translationally, dually phosphorylated on Thr-180 and Tyr-182 by the MAP2Ks MAP2K3/MKK3, MAP2K4/MKK4 and MAP2K6/MKK6 in response to inflammatory citokines, environmental stress or growth factors, which activates the enzyme. Dual phosphorylation can also be mediated by TAB1-mediated autophosphorylation. TCR engagement in T-cells also leads to Tyr-323 phosphorylation by ZAP70. Dephosphorylated and inactivated by DUPS1, DUSP10 and DUSP16. PPM1D also mediates dephosphorylation and inactivation of MAPK14. In terms of processing, acetylated at Lys-53 and Lys-152 by KAT2B and EP300. Acetylation at Lys-53 increases the affinity for ATP and enhances kinase activity. Lys-53 and Lys-152 are deacetylated by HDAC3. Ubiquitinated. Ubiquitination leads to degradation by the proteasome pathway.

The protein resides in the cytoplasm. Its subcellular location is the nucleus. It carries out the reaction L-seryl-[protein] + ATP = O-phospho-L-seryl-[protein] + ADP + H(+). The enzyme catalyses L-threonyl-[protein] + ATP = O-phospho-L-threonyl-[protein] + ADP + H(+). Its activity is regulated as follows. Activated by cell stresses such as DNA damage, heat shock, osmotic shock, anisomycin and sodium arsenite, as well as pro-inflammatory stimuli such as bacterial lipopolysaccharide (LPS) and interleukin-1. Activation occurs through dual phosphorylation of Thr-180 and Tyr-182 by either of two dual specificity kinases, MAP2K3/MKK3 or MAP2K6/MKK6, and potentially also MAP2K4/MKK4, as well as by TAB1-mediated autophosphorylation. MAPK14 phosphorylated on both Thr-180 and Tyr-182 is 10-20-fold more active than MAPK14 phosphorylated only on Thr-180, whereas MAPK14 phosphorylated on Tyr-182 alone is inactive. whereas Thr-180 is necessary for catalysis, Tyr-182 may be required for auto-activation and substrate recognition. Phosphorylated at Tyr-323 by ZAP70 in an alternative activation pathway in response to TCR signaling in T-cells. This alternative pathway is inhibited by GADD45A. Inhibited by dual specificity phosphatases, such as DUSP1, DUSP10, and DUSP16. Specifically inhibited by the binding of pyridinyl-imidazole compounds, which are cytokine-suppressive anti-inflammatory drugs (CSAID). SB203580 is an inhibitor of MAPK14. Serine/threonine kinase which acts as an essential component of the MAP kinase signal transduction pathway. MAPK14 is one of the four p38 MAPKs which play an important role in the cascades of cellular responses evoked by extracellular stimuli such as pro-inflammatory cytokines or physical stress leading to direct activation of transcription factors. Accordingly, p38 MAPKs phosphorylate a broad range of proteins and it has been estimated that they may have approximately 200 to 300 substrates each. Some of the targets are downstream kinases which are activated through phosphorylation and further phosphorylate additional targets. RPS6KA5/MSK1 and RPS6KA4/MSK2 can directly phosphorylate and activate transcription factors such as CREB1, ATF1, the NF-kappa-B isoform RELA/NFKB3, STAT1 and STAT3, but can also phosphorylate histone H3 and the nucleosomal protein HMGN1. RPS6KA5/MSK1 and RPS6KA4/MSK2 play important roles in the rapid induction of immediate-early genes in response to stress or mitogenic stimuli, either by inducing chromatin remodeling or by recruiting the transcription machinery. On the other hand, two other kinase targets, MAPKAPK2/MK2 and MAPKAPK3/MK3, participate in the control of gene expression mostly at the post-transcriptional level, by phosphorylating ZFP36 (tristetraprolin) and ELAVL1, and by regulating EEF2K, which is important for the elongation of mRNA during translation. MKNK1/MNK1 and MKNK2/MNK2, two other kinases activated by p38 MAPKs, regulate protein synthesis by phosphorylating the initiation factor EIF4E2. MAPK14 also interacts with casein kinase II, leading to its activation through autophosphorylation and further phosphorylation of TP53/p53. In the cytoplasm, the p38 MAPK pathway is an important regulator of protein turnover. For example, CFLAR is an inhibitor of TNF-induced apoptosis whose proteasome-mediated degradation is regulated by p38 MAPK phosphorylation. In a similar way, MAPK14 phosphorylates the ubiquitin ligase SIAH2, regulating its activity towards EGLN3. MAPK14 may also inhibit the lysosomal degradation pathway of autophagy by interfering with the intracellular trafficking of the transmembrane protein ATG9. Another function of MAPK14 is to regulate the endocytosis of membrane receptors by different mechanisms that impinge on the small GTPase RAB5A. In addition, clathrin-mediated EGFR internalization induced by inflammatory cytokines and UV irradiation depends on MAPK14-mediated phosphorylation of EGFR itself as well as of RAB5A effectors. Ectodomain shedding of transmembrane proteins is regulated by p38 MAPKs as well. In response to inflammatory stimuli, p38 MAPKs phosphorylate the membrane-associated metalloprotease ADAM17. Such phosphorylation is required for ADAM17-mediated ectodomain shedding of TGF-alpha family ligands, which results in the activation of EGFR signaling and cell proliferation. Another p38 MAPK substrate is FGFR1. FGFR1 can be translocated from the extracellular space into the cytosol and nucleus of target cells, and regulates processes such as rRNA synthesis and cell growth. FGFR1 translocation requires p38 MAPK activation. In the nucleus, many transcription factors are phosphorylated and activated by p38 MAPKs in response to different stimuli. Classical examples include ATF1, ATF2, ATF6, ELK1, PTPRH, DDIT3, TP53/p53 and MEF2C and MEF2A. The p38 MAPKs are emerging as important modulators of gene expression by regulating chromatin modifiers and remodelers. The promoters of several genes involved in the inflammatory response, such as IL6, IL8 and IL12B, display a p38 MAPK-dependent enrichment of histone H3 phosphorylation on 'Ser-10' (H3S10ph) in LPS-stimulated myeloid cells. This phosphorylation enhances the accessibility of the cryptic NF-kappa-B-binding sites marking promoters for increased NF-kappa-B recruitment. Phosphorylates CDC25B and CDC25C which is required for binding to 14-3-3 proteins and leads to initiation of a G2 delay after ultraviolet radiation. Phosphorylates TIAR following DNA damage, releasing TIAR from GADD45A mRNA and preventing mRNA degradation. The p38 MAPKs may also have kinase-independent roles, which are thought to be due to the binding to targets in the absence of phosphorylation. Protein O-Glc-N-acylation catalyzed by the OGT is regulated by MAPK14, and, although OGT does not seem to be phosphorylated by MAPK14, their interaction increases upon MAPK14 activation induced by glucose deprivation. This interaction may regulate OGT activity by recruiting it to specific targets such as neurofilament H, stimulating its O-Glc-N-acylation. Required in mid-fetal development for the growth of embryo-derived blood vessels in the labyrinth layer of the placenta. Also plays an essential role in developmental and stress-induced erythropoiesis, through regulation of EPO gene expression. Phosphorylates S100A9 at 'Thr-113'. This is Mitogen-activated protein kinase 14 from Canis lupus familiaris (Dog).